Reading from the N-terminus, the 318-residue chain is Actin-related protein 2/3 complex subunit 2A (318 aa).

The disordered stretch occupies residues 297–318; it reads RSMNNKSFKRLGLNEVNHTNSK.

This sequence belongs to the ARPC2 family. As to quaternary structure, component of the Arp2/3 complex composed of ARP2, ARP3, ARPC1/p41-ARC, ARPC2/p34-ARC, ARPC3/p21-ARC, ARPC4/p20-ARC and ARPC5/p16-ARC. Interacts with ARPC4. As to expression, expressed at low levels in all tissues with a relatively highest expression in inflorescences.

The protein resides in the cytoplasm. It is found in the cytoskeleton. The protein localises to the cell projection. Functions as actin-binding component of the Arp2/3 complex which is involved in regulation of actin polymerization and together with an activating nucleation-promoting factor (NPF) mediates the formation of branched actin networks. Seems to contact the mother actin filament. Arp2/3 complex plays a critical role in the control of cell morphogenesis via the modulation of cell polarity development. This chain is Actin-related protein 2/3 complex subunit 2A (ARPC2A), found in Arabidopsis thaliana (Mouse-ear cress).